The chain runs to 130 residues: Small ribosomal subunit protein uS9 (130 aa).

The tract at residues 102–130 (GFLTRDPRMKERKKYGLKKARRSPQFSKR) is disordered. The span at 111-130 (KERKKYGLKKARRSPQFSKR) shows a compositional bias: basic residues.

The protein belongs to the universal ribosomal protein uS9 family.

This is Small ribosomal subunit protein uS9 from Clostridium botulinum (strain ATCC 19397 / Type A).